Here is a 697-residue protein sequence, read N- to C-terminus: MSDYEGSGPTEGIDYGHSMVVWPSTGLISGGDVKPGGSSGIAPSMPPGWGDYSPQGIALVQSVLFPGIIRRIILDKELEEGDWSGWSVSVHSPWGNEKVSAARTVLENGLRGGLPEPSRPAAVSFARLEPASGNEQKIIRLMVTQQLEQVTDIPASQLPAAGNNVPVKYRLMDLMQNGTQYMAIIGGIPMTVPVVDAVPVPDRSRPGTNIKDVYSAPVSPNLPDLVLSVGQMNTPVLSNPEIQEEGVIAETGNYVEAGYTMSSNNHDVIVRFPEGSDVSPLYISTVEILDSNGLSQRQEAENKAKDDFRVKKEEAVARAEAEKAKAELFSKAGVNQPPVYTQEMMERANSVMNEQGALVLNNTASSVQLAMTGTGVWTAAGDIAGNISKFFSNALEKVTIPEVSPLLMRISLGALWFHSEEAGAGSDIVPGRNLEAMFSLSAQMLAGQGVVIEPGATSVNLPVRGQLINSNGQLALDLLKTGNESIPAAVPVLNAVRDTATGLDKITLPAVVGAPSRTILVNPVPQPSVPTDTGNHQPVPVTPVHTGTEVKSVEMPVTTITPVSDVGGLRDFIYWRPDAAGTGVEAVYVMLNDPLDSGRFSRKQLDKKYKHAGDFGISDTKKNRETLTKFRDAIEEHLSDKDTVEKGTYRREKGSKVYFNPNTMNVVIIKSNGEFLSGWKINPDADNGRIYLETGEL.

The short motif at His-17–Ser-24 is the TonB box element.

This sequence belongs to the cloacin colicin family.

In terms of biological role, colicins are polypeptide toxins produced by and active against E.coli and closely related bacteria. Functionally, colicin D inhibits protein synthesis. The polypeptide is Colicin-D (cda) (Escherichia coli).